Here is a 603-residue protein sequence, read N- to C-terminus: Cell division control protein 48 homolog B (603 aa).

ATP is bound by residues 63 to 70 (GPPGTGKT) and 327 to 334 (GPPGCSKT).

It belongs to the AAA ATPase family.

The protein resides in the nucleus. It localises to the cytoplasm. Its subcellular location is the cytoskeleton. It is found in the phragmoplast. Functionally, probably functions in cell division and growth processes. Interacts with certain SNAREs as part of specialized membrane fusion events where vesicles from the same organelle fuse (homotypic fusion). This chain is Cell division control protein 48 homolog B (CDC48B), found in Arabidopsis thaliana (Mouse-ear cress).